Here is a 134-residue protein sequence, read N- to C-terminus: Acyl carrier protein, chloroplastic (134 aa).

Residues 1-51 (MATTFSASVSTLATSLATPTRISFQKPALVSRTNLSFNLRRSIPTRLSVSC) constitute a chloroplast transit peptide. The region spanning 55-130 (PETIEKVSKI…EAAELIEELV (76 aa)) is the Carrier domain. The residue at position 90 (Ser90) is an O-(pantetheine 4'-phosphoryl)serine.

It belongs to the acyl carrier protein (ACP) family. In terms of processing, 4'-phosphopantetheine is transferred from CoA to a specific serine of apo-ACP by acpS. This modification is essential for activity because fatty acids are bound in thioester linkage to the sulfhydryl of the prosthetic group. In terms of tissue distribution, seed.

It is found in the plastid. The protein resides in the chloroplast. The protein operates within lipid metabolism; fatty acid biosynthesis. Carrier of the growing fatty acid chain in fatty acid biosynthesis. In Brassica napus (Rape), this protein is Acyl carrier protein, chloroplastic (ACL1.A3).